The following is a 172-amino-acid chain: MSLPNPADLIRQMAVDLRAHLARREITEPRFIGIRTGGVWVAQALQAELGDQSPLGTLDVSFYRDDFSQNGLHPQVRPSELPFEIEGQHLVLVDDVLMSGRTIRAALNELFDYGRPASVTLACLLDLDAGELPIRPNVLGATLSLAAHERVKLTGPTPLALERQDLAPASAL.

The PRPP-binding motif lies at leucine 90–threonine 102.

This sequence belongs to the purine/pyrimidine phosphoribosyltransferase family. PyrR subfamily.

It carries out the reaction UMP + diphosphate = 5-phospho-alpha-D-ribose 1-diphosphate + uracil. Regulates the transcription of the pyrimidine nucleotide (pyr) operon in response to exogenous pyrimidines. Functionally, also displays a weak uracil phosphoribosyltransferase activity which is not physiologically significant. This is Bifunctional protein PyrR from Pseudomonas entomophila (strain L48).